Reading from the N-terminus, the 164-residue chain is Aspartate carbamoyltransferase regulatory chain (164 aa).

4 residues coordinate Zn(2+): C116, C121, C146, and C149.

Belongs to the PyrI family. In terms of assembly, contains catalytic and regulatory chains. Zn(2+) is required as a cofactor.

Involved in allosteric regulation of aspartate carbamoyltransferase. In Staphylothermus marinus (strain ATCC 43588 / DSM 3639 / JCM 9404 / F1), this protein is Aspartate carbamoyltransferase regulatory chain.